Reading from the N-terminus, the 1177-residue chain is DNA-directed RNA polymerase subunit beta (1177 aa).

Residues 1154-1177 (RDTEDDDDHQSADKLNVEVETTKE) are disordered. A compositionally biased stretch (basic and acidic residues) spans 1162-1177 (HQSADKLNVEVETTKE).

Belongs to the RNA polymerase beta chain family. The RNAP catalytic core consists of 2 alpha, 1 beta, 1 beta' and 1 omega subunit. When a sigma factor is associated with the core the holoenzyme is formed, which can initiate transcription.

It catalyses the reaction RNA(n) + a ribonucleoside 5'-triphosphate = RNA(n+1) + diphosphate. In terms of biological role, DNA-dependent RNA polymerase catalyzes the transcription of DNA into RNA using the four ribonucleoside triphosphates as substrates. The polypeptide is DNA-directed RNA polymerase subunit beta (Bacillus mycoides (strain KBAB4) (Bacillus weihenstephanensis)).